The chain runs to 380 residues: MVTNHLLEIENLGQSIWMDNLSRNIIESGELKSMIGKKGIRGITSNPAIFEKAIAGNAIYDADIEAGIKASKSVIEIYESLVFKDIRDACDIFMPVYEETKGLDGYISIEVPPTIAKDTESTISEAIRYYTAIGRENLMIKIPGTPEGLPAVTRVISEGINVNVTLLFSVESYINTAWAYIEGLEARAAKGEDIDKIASVASFFLSRIDSNIDGLIDEKLKKVTDETVKAKLEAVKGKVAIANAKIAYQEYKKIIQSDRWKALSAKGAKEQRLLWASTSTKNPAYSDVMYVDELIGPNTVNTLPPPTIDACADHCDVDNRVETNIEVTKEVMENLKDPDININIDQVMEQLLVEGIDKFIKPFTSLINSLEEKVKKLTPV.

The active-site Schiff-base intermediate with substrate is K141.

This sequence belongs to the transaldolase family. Type 2 subfamily.

It localises to the cytoplasm. It carries out the reaction D-sedoheptulose 7-phosphate + D-glyceraldehyde 3-phosphate = D-erythrose 4-phosphate + beta-D-fructose 6-phosphate. The protein operates within carbohydrate degradation; pentose phosphate pathway; D-glyceraldehyde 3-phosphate and beta-D-fructose 6-phosphate from D-ribose 5-phosphate and D-xylulose 5-phosphate (non-oxidative stage): step 2/3. In terms of biological role, transaldolase is important for the balance of metabolites in the pentose-phosphate pathway. The protein is Transaldolase of Trichodesmium erythraeum (strain IMS101).